The chain runs to 286 residues: tRNA (guanine-N(7)-)-methyltransferase (286 aa).

Residues serine 7 and serine 59 each carry the phosphoserine modification. Residues glycine 103, 126–127, 161–162, and cysteine 181 contribute to the S-adenosyl-L-methionine site; these read EI and NA. The active site involves aspartate 184. 259–261 contributes to the S-adenosyl-L-methionine binding site; sequence TEE.

The protein belongs to the class I-like SAM-binding methyltransferase superfamily. TrmB family. In terms of assembly, forms a complex with TRM82.

Its subcellular location is the nucleus. It carries out the reaction guanosine(46) in tRNA + S-adenosyl-L-methionine = N(7)-methylguanosine(46) in tRNA + S-adenosyl-L-homocysteine. Its pathway is tRNA modification; N(7)-methylguanine-tRNA biosynthesis. Methyltransferase that catalyzes the formation of N(7)-methylguanine at position 46 (m7G46) in tRNA, a modification required to maintain stability of tRNAs; its absence resulting in tRNA decay. Both the D-stem and T-stem structures of tRNAs are required for efficient methyltransferase activity. This Saccharomyces cerevisiae (strain RM11-1a) (Baker's yeast) protein is tRNA (guanine-N(7)-)-methyltransferase.